The following is a 622-amino-acid chain: Cilia- and flagella-associated protein 206 (622 aa).

The disordered stretch occupies residues 571-592 (QVYPPKDTSTQSMREDSTGVPR).

Belongs to the CFAP206 family.

The protein resides in the cytoplasm. It is found in the cytoskeleton. It localises to the cilium axoneme. Its subcellular location is the cilium basal body. Its function is as follows. Essential for sperm motility and is involved in the regulation of the beating frequency of motile cilia on the epithelial cells of the respiratory tract. Required for the establishment of radial spokes in sperm flagella. The sequence is that of Cilia- and flagella-associated protein 206 from Macaca fascicularis (Crab-eating macaque).